The sequence spans 273 residues: Bis(5'-nucleosyl)-tetraphosphatase, symmetrical (273 aa).

Belongs to the Ap4A hydrolase family.

The catalysed reaction is P(1),P(4)-bis(5'-adenosyl) tetraphosphate + H2O = 2 ADP + 2 H(+). Its function is as follows. Hydrolyzes diadenosine 5',5'''-P1,P4-tetraphosphate to yield ADP. The chain is Bis(5'-nucleosyl)-tetraphosphatase, symmetrical from Aliivibrio salmonicida (strain LFI1238) (Vibrio salmonicida (strain LFI1238)).